The sequence spans 612 residues: Glutamine--fructose-6-phosphate aminotransferase [isomerizing] (612 aa).

Cys2 (nucleophile; for GATase activity) is an active-site residue. A Glutamine amidotransferase type-2 domain is found at 2-219; sequence CGIVGANSTR…EGDIAIISKD (218 aa). SIS domains follow at residues 287–427 and 460–602; these read AKEL…LKNS and ISEY…VDQP. The For Fru-6P isomerization activity role is filled by Lys607.

In terms of assembly, homodimer.

Its subcellular location is the cytoplasm. The catalysed reaction is D-fructose 6-phosphate + L-glutamine = D-glucosamine 6-phosphate + L-glutamate. Functionally, catalyzes the first step in hexosamine metabolism, converting fructose-6P into glucosamine-6P using glutamine as a nitrogen source. This is Glutamine--fructose-6-phosphate aminotransferase [isomerizing] from Francisella tularensis subsp. tularensis (strain SCHU S4 / Schu 4).